A 243-amino-acid polypeptide reads, in one-letter code: Type III pantothenate kinase (243 aa).

7 to 14 (DLGNSRFK) contributes to the ATP binding site. Substrate contacts are provided by residues Tyr-91 and 98-101 (GVDR). Asp-100 acts as the Proton acceptor in catalysis. Thr-122 contributes to the ATP binding site. Position 172 (Thr-172) interacts with substrate.

Belongs to the type III pantothenate kinase family. Homodimer. It depends on NH4(+) as a cofactor. K(+) is required as a cofactor.

It localises to the cytoplasm. It catalyses the reaction (R)-pantothenate + ATP = (R)-4'-phosphopantothenate + ADP + H(+). It participates in cofactor biosynthesis; coenzyme A biosynthesis; CoA from (R)-pantothenate: step 1/5. Its function is as follows. Catalyzes the phosphorylation of pantothenate (Pan), the first step in CoA biosynthesis. This is Type III pantothenate kinase from Stenotrophomonas maltophilia (strain R551-3).